A 732-amino-acid chain; its full sequence is Coagulation factor XIII A chain (732 aa).

The tract at residues 1-27 is disordered; it reads MSETSRTAFGGRRAVPPNNSNAAEDDL. N-acetylserine is present on Ser-2. Positions 2 to 38 are cleaved as a propeptide — activation peptide; it reads SETSRTAFGGRRAVPPNNSNAAEDDLPTVELQGVVPR. Residues Cys-315, His-374, and Asp-397 contribute to the active site. Residues Asn-437, Asp-439, Glu-486, and Glu-491 each coordinate Ca(2+). Asn-614 carries N-linked (GlcNAc...) asparagine glycosylation.

Belongs to the transglutaminase superfamily. Transglutaminase family. Tetramer of two A chains (F13A1) and two B (F13B) chains. The cofactor is Ca(2+). In terms of processing, the activation peptide is released by thrombin.

It is found in the cytoplasm. The protein localises to the secreted. The catalysed reaction is L-glutaminyl-[protein] + L-lysyl-[protein] = [protein]-L-lysyl-N(6)-5-L-glutamyl-[protein] + NH4(+). Its function is as follows. Factor XIII is activated by thrombin and calcium ion to a transglutaminase that catalyzes the formation of gamma-glutamyl-epsilon-lysine cross-links between fibrin chains, thus stabilizing the fibrin clot. Also cross-link alpha-2-plasmin inhibitor, or fibronectin, to the alpha chains of fibrin. The chain is Coagulation factor XIII A chain (F13A1) from Homo sapiens (Human).